The sequence spans 364 residues: MEQTLFNPSISMPKSFYHKHITISSRIQCQLSTNSPSSNTKTTTVTVPSKKTMGPYTGRDPNVKKPEWLRQRAPQGERFQEVKHSLSSLKLNTVCEEAQCPNIGECWNGGGDGIATATIMLLGDTCTRGCRFCAVKTSRNPSPPDPLEPQNTALAIASWGVDYIVLTSVDRDDLPDGGSGHFSETVQAMKKLKPEIMVECLTSDFRGDLEAVETLVHSGLDVFAHNIETVKRLQRIVRDPRAGYEQSLSVLKHAKHSKEGMITKSSIMLGLGETDDELKEAMADLRAIDVDILTLGQYLQPTPLHLTVKEYVTPEKFAFWKEYGESIGFRYVASGPMVRSSYRAGELFVKTMVKERSSNSAAKP.

The transit peptide at 1 to 70 directs the protein to the chloroplast; it reads MEQTLFNPSI…PNVKKPEWLR (70 aa). Residues 32 to 52 are compositionally biased toward low complexity; the sequence is STNSPSSNTKTTTVTVPSKKT. Positions 32–64 are disordered; sequence STNSPSSNTKTTTVTVPSKKTMGPYTGRDPNVK. Residues cysteine 95, cysteine 100, cysteine 106, cysteine 126, cysteine 130, cysteine 133, and serine 341 each coordinate [4Fe-4S] cluster. Residues 109-330 enclose the Radical SAM core domain; that stretch reads GGGDGIATAT…KEYGESIGFR (222 aa).

Belongs to the radical SAM superfamily. Lipoyl synthase family. It depends on [4Fe-4S] cluster as a cofactor.

Its subcellular location is the plastid. It localises to the chloroplast. The enzyme catalyses [[Fe-S] cluster scaffold protein carrying a second [4Fe-4S](2+) cluster] + N(6)-octanoyl-L-lysyl-[protein] + 2 oxidized [2Fe-2S]-[ferredoxin] + 2 S-adenosyl-L-methionine + 4 H(+) = [[Fe-S] cluster scaffold protein] + N(6)-[(R)-dihydrolipoyl]-L-lysyl-[protein] + 4 Fe(3+) + 2 hydrogen sulfide + 2 5'-deoxyadenosine + 2 L-methionine + 2 reduced [2Fe-2S]-[ferredoxin]. It functions in the pathway protein modification; protein lipoylation via endogenous pathway; protein N(6)-(lipoyl)lysine from octanoyl-[acyl-carrier-protein]: step 2/2. Functionally, catalyzes the radical-mediated insertion of two sulfur atoms into the C-6 and C-8 positions of the octanoyl moiety bound to the lipoyl domains of lipoate-dependent enzymes, thereby converting the octanoylated domains into lipoylated derivatives. The protein is Lipoyl synthase, chloroplastic of Ricinus communis (Castor bean).